Here is a 237-residue protein sequence, read N- to C-terminus: Mediator of RNA polymerase II transcription subunit 20 (237 aa).

It belongs to the Mediator complex subunit 20 family. Component of the Mediator complex.

It localises to the nucleus. In terms of biological role, component of the Mediator complex, a coactivator involved in the regulated transcription of nearly all RNA polymerase II-dependent genes. Mediator functions as a bridge to convey information from gene-specific regulatory proteins to the basal RNA polymerase II transcription machinery. Mediator is recruited to promoters by direct interactions with regulatory proteins and serves as a scaffold for the assembly of a functional preinitiation complex with RNA polymerase II and the general transcription factors. This chain is Mediator of RNA polymerase II transcription subunit 20 (SRB2), found in Scheffersomyces stipitis (strain ATCC 58785 / CBS 6054 / NBRC 10063 / NRRL Y-11545) (Yeast).